The following is a 253-amino-acid chain: Imidazole glycerol phosphate synthase subunit HisF (253 aa).

Active-site residues include Asp-11 and Asp-130.

It belongs to the HisA/HisF family. Heterodimer of HisH and HisF.

It localises to the cytoplasm. The enzyme catalyses 5-[(5-phospho-1-deoxy-D-ribulos-1-ylimino)methylamino]-1-(5-phospho-beta-D-ribosyl)imidazole-4-carboxamide + L-glutamine = D-erythro-1-(imidazol-4-yl)glycerol 3-phosphate + 5-amino-1-(5-phospho-beta-D-ribosyl)imidazole-4-carboxamide + L-glutamate + H(+). Its pathway is amino-acid biosynthesis; L-histidine biosynthesis; L-histidine from 5-phospho-alpha-D-ribose 1-diphosphate: step 5/9. IGPS catalyzes the conversion of PRFAR and glutamine to IGP, AICAR and glutamate. The HisF subunit catalyzes the cyclization activity that produces IGP and AICAR from PRFAR using the ammonia provided by the HisH subunit. The polypeptide is Imidazole glycerol phosphate synthase subunit HisF (Ruminiclostridium cellulolyticum (strain ATCC 35319 / DSM 5812 / JCM 6584 / H10) (Clostridium cellulolyticum)).